A 308-amino-acid chain; its full sequence is GTP cyclohydrolase FolE2 (308 aa).

It belongs to the GTP cyclohydrolase IV family.

The catalysed reaction is GTP + H2O = 7,8-dihydroneopterin 3'-triphosphate + formate + H(+). Its pathway is cofactor biosynthesis; 7,8-dihydroneopterin triphosphate biosynthesis; 7,8-dihydroneopterin triphosphate from GTP: step 1/1. Converts GTP to 7,8-dihydroneopterin triphosphate. This Colwellia psychrerythraea (strain 34H / ATCC BAA-681) (Vibrio psychroerythus) protein is GTP cyclohydrolase FolE2.